A 243-amino-acid polypeptide reads, in one-letter code: UTP--glucose-1-phosphate uridylyltransferase AglF (243 aa).

It belongs to the UDPGP type 2 family.

It catalyses the reaction alpha-D-glucose 1-phosphate + UTP + H(+) = UDP-alpha-D-glucose + diphosphate. It participates in cell surface structure biogenesis; S-layer biogenesis. Its function is as follows. Involved in the assembly of a N-linked pentasaccharide that decorates the S-layer glycoprotein and flagellins. Involved in the biosynthesis of the hexuronic acid found at position 3 of the pentasaccharide. This chain is UTP--glucose-1-phosphate uridylyltransferase AglF (aglF), found in Haloferax volcanii (strain ATCC 29605 / DSM 3757 / JCM 8879 / NBRC 14742 / NCIMB 2012 / VKM B-1768 / DS2) (Halobacterium volcanii).